The following is a 160-amino-acid chain: Protein-export protein SecB (160 aa).

This sequence belongs to the SecB family. In terms of assembly, homotetramer, a dimer of dimers. One homotetramer interacts with 1 SecA dimer.

It localises to the cytoplasm. One of the proteins required for the normal export of preproteins out of the cell cytoplasm. It is a molecular chaperone that binds to a subset of precursor proteins, maintaining them in a translocation-competent state. It also specifically binds to its receptor SecA. This is Protein-export protein SecB from Rhizobium etli (strain ATCC 51251 / DSM 11541 / JCM 21823 / NBRC 15573 / CFN 42).